The following is a 786-amino-acid chain: DNA ligase (786 aa).

Residues 32-36 (DAEYD), 81-82 (SL), and Glu121 each bind NAD(+). Residue Lys123 is the N6-AMP-lysine intermediate of the active site. NAD(+) is bound by residues Arg144, Glu181, Lys297, and Lys321. Zn(2+) is bound by residues Cys415, Cys418, Cys445, and Cys451. Residues 703 to 786 (AEGLPLAGQT…EQLKSYGIEA (84 aa)) enclose the BRCT domain.

The protein belongs to the NAD-dependent DNA ligase family. LigA subfamily. Mg(2+) is required as a cofactor. It depends on Mn(2+) as a cofactor.

It carries out the reaction NAD(+) + (deoxyribonucleotide)n-3'-hydroxyl + 5'-phospho-(deoxyribonucleotide)m = (deoxyribonucleotide)n+m + AMP + beta-nicotinamide D-nucleotide.. DNA ligase that catalyzes the formation of phosphodiester linkages between 5'-phosphoryl and 3'-hydroxyl groups in double-stranded DNA using NAD as a coenzyme and as the energy source for the reaction. It is essential for DNA replication and repair of damaged DNA. This Ectopseudomonas mendocina (strain ymp) (Pseudomonas mendocina) protein is DNA ligase.